The sequence spans 381 residues: Mannitol-1-phosphate 5-dehydrogenase (381 aa).

3-14 (AVHFGAGNIGRG) is a binding site for NAD(+).

Belongs to the mannitol dehydrogenase family.

It carries out the reaction D-mannitol 1-phosphate + NAD(+) = beta-D-fructose 6-phosphate + NADH + H(+). In Exiguobacterium sibiricum (strain DSM 17290 / CCUG 55495 / CIP 109462 / JCM 13490 / 255-15), this protein is Mannitol-1-phosphate 5-dehydrogenase.